Reading from the N-terminus, the 168-residue chain is NADH dehydrogenase [ubiquinone] 1 alpha subcomplex assembly factor 2 (168 aa).

Residues 108–118 show a composition bias toward basic and acidic residues; the sequence is KEKLLQEESNK. Positions 108 to 168 are disordered; sequence KEKLLQEESN…MPHGDKGHSQ (61 aa). A Phosphoserine modification is found at serine 133. Residues 144-155 show a composition bias toward polar residues; the sequence is ESPTSTGKTFQP.

This sequence belongs to the complex I NDUFA12 subunit family. Interacts with ARMC9.

It localises to the mitochondrion. Acts as a molecular chaperone for mitochondrial complex I assembly. Complex I functions in the transfer of electrons from NADH to the respiratory chain. The immediate electron acceptor for the enzyme is believed to be ubiquinone. Is involved in the initial steps of cilia formation, including removal of CP110 from the mother centrioles, docking of membrane vesicles to the mother centrioles, and establishment of the transition zone. This Bos taurus (Bovine) protein is NADH dehydrogenase [ubiquinone] 1 alpha subcomplex assembly factor 2 (NDUFAF2).